Here is a 119-residue protein sequence, read N- to C-terminus: Large ribosomal subunit protein bL20 (119 aa).

This sequence belongs to the bacterial ribosomal protein bL20 family.

Its function is as follows. Binds directly to 23S ribosomal RNA and is necessary for the in vitro assembly process of the 50S ribosomal subunit. It is not involved in the protein synthesizing functions of that subunit. The polypeptide is Large ribosomal subunit protein bL20 (Listeria innocua serovar 6a (strain ATCC BAA-680 / CLIP 11262)).